A 185-amino-acid chain; its full sequence is MMGKLIWLMGPSGSGKDSLLAELRLREQTQLLVAHRYITRDASAGSENHIALSEQEFFTRAGQNLLALSWHANGLYYGVGVEIDLWLHAGFDVLVNGSRAHLPQARARYQSALLPICLQVSPEILRQRLENRGRENASEINARLARAARYTPQDCHTLNNDGSLRQSVDTLLTLIHQKEKHHACL.

Position 10–17 (10–17) interacts with ATP; the sequence is GPSGSGKD.

The protein belongs to the ribose 1,5-bisphosphokinase family.

It catalyses the reaction alpha-D-ribose 1,5-bisphosphate + ATP = 5-phospho-alpha-D-ribose 1-diphosphate + ADP. Its pathway is metabolic intermediate biosynthesis; 5-phospho-alpha-D-ribose 1-diphosphate biosynthesis; 5-phospho-alpha-D-ribose 1-diphosphate from D-ribose 5-phosphate (route II): step 3/3. Functionally, catalyzes the phosphorylation of ribose 1,5-bisphosphate to 5-phospho-D-ribosyl alpha-1-diphosphate (PRPP). This chain is Ribose 1,5-bisphosphate phosphokinase PhnN, found in Escherichia coli O157:H7.